The chain runs to 268 residues: Endonuclease 8 1 (268 aa).

Pro-2 functions as the Schiff-base intermediate with DNA in the catalytic mechanism. The Proton donor role is filled by Glu-3. Residue Lys-52 is the Proton donor; for beta-elimination activity of the active site. DNA is bound by residues Arg-125 and Asn-166. Residues 234–268 (YVYRRAGEPCRVCGGVIRTALLEGRNVFWCPVCQT) form an FPG-type zinc finger. Arg-258 (proton donor; for delta-elimination activity) is an active-site residue.

This sequence belongs to the FPG family. It depends on Zn(2+) as a cofactor.

The catalysed reaction is 2'-deoxyribonucleotide-(2'-deoxyribose 5'-phosphate)-2'-deoxyribonucleotide-DNA = a 3'-end 2'-deoxyribonucleotide-(2,3-dehydro-2,3-deoxyribose 5'-phosphate)-DNA + a 5'-end 5'-phospho-2'-deoxyribonucleoside-DNA + H(+). Involved in base excision repair of DNA damaged by oxidation or by mutagenic agents. Acts as a DNA glycosylase that recognizes and removes damaged bases. Has AP (apurinic/apyrimidinic) lyase activity and introduces nicks in the DNA strand. Cleaves the DNA backbone by beta-delta elimination to generate a single-strand break at the site of the removed base with both 3'- and 5'-phosphates. This is Endonuclease 8 1 (nei1) from Mycobacterium bovis (strain ATCC BAA-935 / AF2122/97).